Consider the following 172-residue polypeptide: L-amino acid N-acyltransferase MnaT (172 aa).

The N-acetyltransferase domain maps to 1–163 (MSIRFARKAD…DLTFMQLQLD (163 aa)). Residues 85–87 (VYV), 93–98 (GKGLGR), Asn124, and Ser133 each bind acetyl-CoA.

The protein belongs to the acetyltransferase family. PAT/BAR subfamily.

The enzyme catalyses L-methionine + acetyl-CoA = N-acetyl-L-methionine + CoA + H(+). The catalysed reaction is propanoyl-CoA + L-methionine = N-propanoyl-L-methioninate + CoA + H(+). It carries out the reaction L-alpha-phenylglycine + acetyl-CoA = N-acetyl-L-alpha-phenylglycine + CoA + H(+). It catalyses the reaction L-methionine sulfoximine + acetyl-CoA = N-acetyl-L-methionine sulfoximine + CoA + H(+). The enzyme catalyses L-methionine sulfone + acetyl-CoA = N-acetyl-L-methionine sulfone + CoA + H(+). In terms of biological role, acyltransferase that appears to be required for E.coli optimal growth rate and yield via the formation of N-acetylated amino acids. Catalyzes the acylation of L-methionine using acetyl-CoA or propanoyl-CoA as acyl donors, and the acetylation of L-phenylglycine. Is also able to N-acylate other free L-amino acids and their derivatives using a CoA thioester as cosubstrate. Using acetyl-CoA as an acyl donor, substrate specificity is methionine sulfone &gt; methionine sulfoximine &gt; methionine sulfoxide &gt; methionine. Asparagine, lysine, glutamine, aspartate and glutamate are very poor substrates. Using methionine as a substrate, acyl donor preference is propanoyl-CoA &gt; acetyl-CoA &gt;&gt; butyryl-CoA. Likely plays a role in the resistance against the toxic effects of L-methionine sulfoximine (MSX), via its ability to catalyze its acetylation; MSX is a rare amino acid which inhibits glutamine synthetase (GlnA). This chain is L-amino acid N-acyltransferase MnaT, found in Escherichia coli (strain K12).